Here is a 141-residue protein sequence, read N- to C-terminus: Putative nickel-responsive regulator (141 aa).

4 residues coordinate Ni(2+): H80, H91, H93, and C99.

This sequence belongs to the transcriptional regulatory CopG/NikR family. The cofactor is Ni(2+).

Its function is as follows. Transcriptional regulator. The sequence is that of Putative nickel-responsive regulator from Methanococcus maripaludis (strain C5 / ATCC BAA-1333).